Reading from the N-terminus, the 157-residue chain is Transcription antitermination protein NusB (157 aa).

This sequence belongs to the NusB family.

In terms of biological role, involved in transcription antitermination. Required for transcription of ribosomal RNA (rRNA) genes. Binds specifically to the boxA antiterminator sequence of the ribosomal RNA (rrn) operons. This chain is Transcription antitermination protein NusB, found in Xylella fastidiosa (strain Temecula1 / ATCC 700964).